The following is a 397-amino-acid chain: MASLAVSINQFAVEFSKKLAESAEGRNIFFSPWGISTSLAMVYLGTKGTTAAQMSQVLHFGSIQDFKFGPDSEKKRKMECHSGKSEEMQSDFQTLTAKILKHGNSYVLKIANRIYVEKTYLFHNKYLEDMKTYFGAEPQSVNFVEASGQIRKEINSWVGSQTGDKIPNLLPDDAVDNKTTMVLVNALYFKGTWEHQFSVQNTTERPFRINKTTSKPVQMMSMKQSLQVFHIEELQTIGVQLHYQNREFSLLLLLPEEVEGLKQLERAITYEKLDKWTSADMMDTYEVRLYLPKFKMEESYDLQSALRDMGMTDAFNQGKANFSNMTSERNLFLSNVFHKTFLEINEEGTEAAAGTGSEVNFRIKAPSIELNADHPFLFLIRHNVTNTILFDGRFYSP.

Positions 74–77 (KKRK) match the Nuclear localization signal motif.

It belongs to the serpin family. Ov-serpin subfamily. Expressed in many tissues, including brain, heart, kidney, liver, lung, prostate, skin, spleen and stomach.

It localises to the nucleus. It is found in the cytoplasm. Functionally, protease inhibitor that may play a role in the regulation of protease activities during hematopoiesis and apoptosis induced by TNF. May regulate protease activities in the cytoplasm and in the nucleus. Inhibits plasmin. This chain is Serpin B10 (Serpinb10), found in Rattus norvegicus (Rat).